A 90-amino-acid chain; its full sequence is Large ribosomal subunit protein eL37 (90 aa).

The A20-type zinc-finger motif lies at 13-46 (NKSHTLCNRCGRRSFHVQKKTCSSCGYPAAKMRS). 4 residues coordinate Zn(2+): C19, C22, C34, and C37.

It belongs to the eukaryotic ribosomal protein eL37 family. In terms of assembly, component of the large ribosomal subunit. Mature ribosomes consist of a small (40S) and a large (60S) subunit. The 40S subunit contains about 32 different proteins and 1 molecule of RNA (18S). The 60S subunit contains 45 different proteins and 3 molecules of RNA (25S, 5.8S and 5S). Zn(2+) serves as cofactor.

Its subcellular location is the cytoplasm. In terms of biological role, component of the ribosome, a large ribonucleoprotein complex responsible for the synthesis of proteins in the cell. The small ribosomal subunit (SSU) binds messenger RNAs (mRNAs) and translates the encoded message by selecting cognate aminoacyl-transfer RNA (tRNA) molecules. The large subunit (LSU) contains the ribosomal catalytic site termed the peptidyl transferase center (PTC), which catalyzes the formation of peptide bonds, thereby polymerizing the amino acids delivered by tRNAs into a polypeptide chain. The nascent polypeptides leave the ribosome through a tunnel in the LSU and interact with protein factors that function in enzymatic processing, targeting, and the membrane insertion of nascent chains at the exit of the ribosomal tunnel. The polypeptide is Large ribosomal subunit protein eL37 (Candida albicans (strain SC5314 / ATCC MYA-2876) (Yeast)).